The following is a 360-amino-acid chain: UDP-N-acetylglucosamine--N-acetylmuramyl-(pentapeptide) pyrophosphoryl-undecaprenol N-acetylglucosamine transferase (360 aa).

Residues 12 to 14 (TAG), Ser-198, and Gln-289 each bind UDP-N-acetyl-alpha-D-glucosamine.

This sequence belongs to the glycosyltransferase 28 family. MurG subfamily.

The protein resides in the cell membrane. The catalysed reaction is Mur2Ac(oyl-L-Ala-gamma-D-Glu-L-Lys-D-Ala-D-Ala)-di-trans,octa-cis-undecaprenyl diphosphate + UDP-N-acetyl-alpha-D-glucosamine = beta-D-GlcNAc-(1-&gt;4)-Mur2Ac(oyl-L-Ala-gamma-D-Glu-L-Lys-D-Ala-D-Ala)-di-trans,octa-cis-undecaprenyl diphosphate + UDP + H(+). The protein operates within cell wall biogenesis; peptidoglycan biosynthesis. In terms of biological role, cell wall formation. Catalyzes the transfer of a GlcNAc subunit on undecaprenyl-pyrophosphoryl-MurNAc-pentapeptide (lipid intermediate I) to form undecaprenyl-pyrophosphoryl-MurNAc-(pentapeptide)GlcNAc (lipid intermediate II). This chain is UDP-N-acetylglucosamine--N-acetylmuramyl-(pentapeptide) pyrophosphoryl-undecaprenol N-acetylglucosamine transferase, found in Streptococcus equi subsp. zooepidemicus (strain MGCS10565).